Reading from the N-terminus, the 354-residue chain is Protein RecA (354 aa).

Residue 65-72 coordinates ATP; it reads GPESSGKT.

This sequence belongs to the RecA family.

It is found in the cytoplasm. In terms of biological role, can catalyze the hydrolysis of ATP in the presence of single-stranded DNA, the ATP-dependent uptake of single-stranded DNA by duplex DNA, and the ATP-dependent hybridization of homologous single-stranded DNAs. It interacts with LexA causing its activation and leading to its autocatalytic cleavage. The chain is Protein RecA from Pseudomonas syringae pv. syringae (strain B728a).